A 278-amino-acid chain; its full sequence is Type II restriction enzyme AgeI (278 aa).

Belongs to the BsaWI type II restriction endonuclease family.

The catalysed reaction is Endonucleolytic cleavage of DNA to give specific double-stranded fragments with terminal 5'-phosphates.. A P subtype restriction enzyme that recognizes the double-stranded sequence 5'-ACCGGT-3' and cleaves after A-1. This is Type II restriction enzyme AgeI (ageIR) from Thalassovita gelatinovora (Thalassobius gelatinovorus).